The primary structure comprises 472 residues: Diaminopimelate decarboxylase (472 aa).

Residues 1–23 (MNVHTAGPRHAEKTRHTATPQRV) are disordered. Lys97 carries the N6-(pyridoxal phosphate)lysine modification. Residues Gly283 and 325-328 (EPGR) each bind pyridoxal 5'-phosphate. Substrate is bound by residues Arg328, Arg369, and Tyr373. Catalysis depends on Cys400, which acts as the Proton donor. Positions 401 and 430 each coordinate substrate. Residue Tyr430 participates in pyridoxal 5'-phosphate binding.

This sequence belongs to the Orn/Lys/Arg decarboxylase class-II family. LysA subfamily. As to quaternary structure, homodimer. The cofactor is pyridoxal 5'-phosphate.

It carries out the reaction meso-2,6-diaminopimelate + H(+) = L-lysine + CO2. The protein operates within amino-acid biosynthesis; L-lysine biosynthesis via DAP pathway; L-lysine from DL-2,6-diaminopimelate: step 1/1. Specifically catalyzes the decarboxylation of meso-diaminopimelate (meso-DAP) to L-lysine. The protein is Diaminopimelate decarboxylase of Mycobacterium leprae (strain TN).